We begin with the raw amino-acid sequence, 530 residues long: Glucose-6-phosphate isomerase (530 aa).

The Proton donor role is filled by Glu-356. Catalysis depends on residues His-387 and Lys-502.

Belongs to the GPI family.

Its subcellular location is the cytoplasm. The catalysed reaction is alpha-D-glucose 6-phosphate = beta-D-fructose 6-phosphate. Its pathway is carbohydrate biosynthesis; gluconeogenesis. It functions in the pathway carbohydrate degradation; glycolysis; D-glyceraldehyde 3-phosphate and glycerone phosphate from D-glucose: step 2/4. Functionally, catalyzes the reversible isomerization of glucose-6-phosphate to fructose-6-phosphate. This chain is Glucose-6-phosphate isomerase, found in Borrelia garinii subsp. bavariensis (strain ATCC BAA-2496 / DSM 23469 / PBi) (Borreliella bavariensis).